The chain runs to 101 residues: MIPGQYQIADGEIELNAGRRTLTLSVANSGDRPIQVGSHYHFFETNDALIFDRASTRGMRLNIPAGTAVRFEPGQSREVELVDLAGARRVFGFAGRVMGDL.

Belongs to the urease beta subunit family. As to quaternary structure, heterotrimer of UreA (gamma), UreB (beta) and UreC (alpha) subunits. Three heterotrimers associate to form the active enzyme.

Its subcellular location is the cytoplasm. It carries out the reaction urea + 2 H2O + H(+) = hydrogencarbonate + 2 NH4(+). It participates in nitrogen metabolism; urea degradation; CO(2) and NH(3) from urea (urease route): step 1/1. This is Urease subunit beta from Ectopseudomonas mendocina (strain ymp) (Pseudomonas mendocina).